The sequence spans 295 residues: MTSSRPVFRSSWLPYVLVLPQLLITVIFFIWPAGQALWYSVQNLDPFGLSSEFVGMENFRQLFNNPYYLDSFYTTLIFSFLVAGFGMLISLFLAALVDYVIRASRLYQTLIILPYAVAPAVAAVLWMFLFNPGLGLITHFLGLLGYTWNHAQDSGQAMFLVVLASVWKQISYNFLFFLAALQSIPRSLVEAGAIDGAGPVRRFFNLVLPMISPVSFFLLVVNLVYAFFDTFPIIDAATAGGPVQSTTTLIYKIYREGFAGLDLSSSAAQSVILMLLVIGLTVIQFRFVERKVNYQ.

At 1–11 the chain is on the cytoplasmic side; that stretch reads MTSSRPVFRSS. The chain crosses the membrane as a helical span at residues 12–32; sequence WLPYVLVLPQLLITVIFFIWP. Over 33-76 the chain is Periplasmic; that stretch reads AGQALWYSVQNLDPFGLSSEFVGMENFRQLFNNPYYLDSFYTTL. Residues 76-284 enclose the ABC transmembrane type-1 domain; that stretch reads LIFSFLVAGF…LLVIGLTVIQ (209 aa). Residues 77–97 form a helical membrane-spanning segment; it reads IFSFLVAGFGMLISLFLAALV. The Cytoplasmic segment spans residues 98-109; it reads DYVIRASRLYQT. A helical transmembrane segment spans residues 110–130; that stretch reads LIILPYAVAPAVAAVLWMFLF. The Periplasmic portion of the chain corresponds to 131 to 157; that stretch reads NPGLGLITHFLGLLGYTWNHAQDSGQA. The helical transmembrane segment at 158-178 threads the bilayer; the sequence is MFLVVLASVWKQISYNFLFFL. At 179–207 the chain is on the cytoplasmic side; sequence AALQSIPRSLVEAGAIDGAGPVRRFFNLV. The helical transmembrane segment at 208-228 threads the bilayer; that stretch reads LPMISPVSFFLLVVNLVYAFF. The Periplasmic portion of the chain corresponds to 229–262; the sequence is DTFPIIDAATAGGPVQSTTTLIYKIYREGFAGLD. A helical transmembrane segment spans residues 263 to 283; that stretch reads LSSSAAQSVILMLLVIGLTVI. Residues 284–295 are Cytoplasmic-facing; sequence QFRFVERKVNYQ.

This sequence belongs to the binding-protein-dependent transport system permease family. UgpAE subfamily. As to quaternary structure, the complex is composed of two ATP-binding proteins (UgpC), two transmembrane proteins (UgpA and UgpE) and a solute-binding protein (UgpB).

The protein resides in the cell inner membrane. Its function is as follows. Part of the ABC transporter complex UgpBAEC involved in sn-glycerol-3-phosphate (G3P) import. Probably responsible for the translocation of the substrate across the membrane. The polypeptide is sn-glycerol-3-phosphate transport system permease protein UgpA (ugpA) (Pectobacterium atrosepticum (strain SCRI 1043 / ATCC BAA-672) (Erwinia carotovora subsp. atroseptica)).